The following is a 133-amino-acid chain: Nucleoid-associated protein Mb3743c (133 aa).

Residues 98–133 (GAMRPPAPPAAPPGAPGMPGMPGMPGAPGAPPVPGI) are disordered. The segment covering 102-113 (PPAPPAAPPGAP) has biased composition (pro residues).

The protein belongs to the YbaB/EbfC family. As to quaternary structure, homodimer.

Its subcellular location is the cytoplasm. It is found in the nucleoid. Binds to DNA and alters its conformation. May be involved in regulation of gene expression, nucleoid organization and DNA protection. In Mycobacterium bovis (strain ATCC BAA-935 / AF2122/97), this protein is Nucleoid-associated protein Mb3743c.